Reading from the N-terminus, the 383-residue chain is MFIYYCKECSIMNKQQSKVRYSIRKVSIGILSISIGMFLALGMSNKAYADEIDKSKDFTRGYEQNVFAKSELNANKNTTKDKIKNEGAVKTSDTSLKLDNKSAISNGNEINQDIKISNTPKNSSQGNNLVINNNEPTKEIKIANLEAQNSNQKKTNKVTNNYFGYYSFREAPKTQIYTVKKGDTLSAIALKYKTTVSNIQNTNNIANPNLIFIGQKLKVPMTPLVEPKPKTVSSNNKSNSNSSTLNYLKTLENRGWDFDGSYGWQCFDLVNVYWNHLYGHGLKGYGAKDIPYANNFNSEAKIYHNTPTFKAEPGDLVVFSGRFGGGYGHTAIVLNGDYDGKLMKFQSLDQNWNNGGWRKAEVAHKVVHNYENDMIFIRPFKKA.

Positions 1-49 are cleaved as a signal peptide; it reads MFIYYCKECSIMNKQQSKVRYSIRKVSIGILSISIGMFLALGMSNKAYA. One can recognise a LysM domain in the interval 175–219; it reads QIYTVKKGDTLSAIALKYKTTVSNIQNTNNIANPNLIFIGQKLKV. A Peptidase C51 domain is found at 241–378; sequence NSSTLNYLKT…NYENDMIFIR (138 aa).

It localises to the secreted. Its function is as follows. Probably involved in peptidoglycan hydrolysis. The chain is Probable cell wall hydrolase LytN (lytN) from Staphylococcus aureus (strain Mu50 / ATCC 700699).